The chain runs to 489 residues: NADH-quinone oxidoreductase subunit N (489 aa).

14 helical membrane-spanning segments follow: residues 8–28, 35–55, 75–95, 105–125, 127–147, 159–179, 203–223, 235–255, 271–291, 303–323, 329–349, 374–394, 407–427, and 456–476; these read LIAM…MLSI, FTIA…LYYV, FFTA…YPWL, FYML…AHHL, SMFI…GYAF, YMLL…LLYA, VLAG…LFPF, PAPT…AVVM, MILG…ALTQ, VSHL…PILA, IYLA…AVAS, AVVM…LGFI, SLWW…FYYL, and LITL…QPLI.

It belongs to the complex I subunit 2 family. NDH-1 is composed of 13 different subunits. Subunits NuoA, H, J, K, L, M, N constitute the membrane sector of the complex.

Its subcellular location is the cell inner membrane. It catalyses the reaction a quinone + NADH + 5 H(+)(in) = a quinol + NAD(+) + 4 H(+)(out). Its function is as follows. NDH-1 shuttles electrons from NADH, via FMN and iron-sulfur (Fe-S) centers, to quinones in the respiratory chain. The immediate electron acceptor for the enzyme in this species is believed to be ubiquinone. Couples the redox reaction to proton translocation (for every two electrons transferred, four hydrogen ions are translocated across the cytoplasmic membrane), and thus conserves the redox energy in a proton gradient. In Proteus mirabilis (strain HI4320), this protein is NADH-quinone oxidoreductase subunit N.